Consider the following 364-residue polypeptide: DNA replication and repair protein RecF (364 aa).

30–37 (GNNGQGKT) lines the ATP pocket.

Belongs to the RecF family.

The protein localises to the cytoplasm. In terms of biological role, the RecF protein is involved in DNA metabolism; it is required for DNA replication and normal SOS inducibility. RecF binds preferentially to single-stranded, linear DNA. It also seems to bind ATP. This is DNA replication and repair protein RecF from Geotalea daltonii (strain DSM 22248 / JCM 15807 / FRC-32) (Geobacter daltonii).